The chain runs to 466 residues: Rhodanese-like domain-containing protein 4, chloroplastic (466 aa).

The N-terminal 15 residues, 1 to 15 (MEALKTATFSPMSVL), are a transit peptide targeting the chloroplast. Residues 1 to 35 (MEALKTATFSPMSVLSEKRSEPRKPFSLPNLFPPK) form a disordered region. The N-terminal 54 residues, 16–69 (SEKRSEPRKPFSLPNLFPPKSQRPISQESFLKRFNGGLALLTSVLSSATAPAKS), are a transit peptide targeting the thylakoid. Residues 103–123 (PLVIAGGVAALAVPFVLSQVL) traverse the membrane as a helical segment. Positions 144-250 (TDDNAQLLDI…WLNSSLPWIE (107 aa)) constitute a Rhodanese domain. Residues 277 to 297 (VSVALGVAAAAGLSVFAFTEI) form a helical membrane-spanning segment. Positions 373-384 (EAESATATTTTV) are enriched in low complexity. 2 disordered regions span residues 373-392 (EAESATATTTTVDKPVPEPE) and 426-466 (AQVI…PSQP). Over residues 455 to 466 (LKPPSSPMPSQP) the composition is skewed to pro residues.

In terms of assembly, component of high molecular weight thylakoid LFNRs-containing protein complexes containing LIR1, LFNR1, LFNR2, TIC62 and TROL proteins. Expressed in leaves and stems, and at lower levels in flowers and siliques (at protein level).

The protein localises to the plastid. It is found in the chloroplast envelope. Its subcellular location is the chloroplast thylakoid membrane. In terms of biological role, rhodanese domain-containing protein required for anchoring ferredoxin--NADP reductase to the thylakoid membranes and sustaining efficient linear electron flow (LEF). This Arabidopsis thaliana (Mouse-ear cress) protein is Rhodanese-like domain-containing protein 4, chloroplastic.